A 427-amino-acid polypeptide reads, in one-letter code: Adenylosuccinate synthetase (427 aa).

Residues 12–18 and 40–42 each bind GTP; these read GDEGKGK and GHT. Asp13 (proton acceptor) is an active-site residue. Residues Asp13 and Gly40 each contribute to the Mg(2+) site. IMP contacts are provided by residues 13-16, 38-41, Thr128, Arg142, Gln223, Thr238, and Arg302; these read DEGK and NAGH. The active-site Proton donor is His41. 298 to 304 is a substrate binding site; it reads VTTGRAR. GTP contacts are provided by residues Arg304, 330–332, and 412–414; these read KLD and GVG.

It belongs to the adenylosuccinate synthetase family. In terms of assembly, homodimer. Mg(2+) serves as cofactor.

It is found in the cytoplasm. It catalyses the reaction IMP + L-aspartate + GTP = N(6)-(1,2-dicarboxyethyl)-AMP + GDP + phosphate + 2 H(+). It functions in the pathway purine metabolism; AMP biosynthesis via de novo pathway; AMP from IMP: step 1/2. Its function is as follows. Plays an important role in the de novo pathway of purine nucleotide biosynthesis. Catalyzes the first committed step in the biosynthesis of AMP from IMP. This is Adenylosuccinate synthetase from Frankia casuarinae (strain DSM 45818 / CECT 9043 / HFP020203 / CcI3).